The sequence spans 147 residues: Hemoglobin subunit beta-1 (147 aa).

The 145-residue stretch at 3 to 147 folds into the Globin domain; sequence HWTDFERSTI…VVFSLGKQYH (145 aa). Positions 64 and 93 each coordinate heme b.

The protein belongs to the globin family. As to quaternary structure, hb1 is a heterotetramer of two alpha-1 chains and two beta-1 chains. In terms of tissue distribution, red blood cells.

In terms of biological role, involved in oxygen transport from gills to the various peripheral tissues. In Liparis tunicatus (Kelp snailfish), this protein is Hemoglobin subunit beta-1.